The sequence spans 550 residues: Arginine--tRNA ligase (550 aa).

The short motif at 123–133 (ANPTGYLHIAH) is the 'HIGH' region element.

This sequence belongs to the class-I aminoacyl-tRNA synthetase family. Monomer.

Its subcellular location is the cytoplasm. The catalysed reaction is tRNA(Arg) + L-arginine + ATP = L-arginyl-tRNA(Arg) + AMP + diphosphate. In Ureaplasma parvum serovar 3 (strain ATCC 27815 / 27 / NCTC 11736), this protein is Arginine--tRNA ligase.